Consider the following 396-residue polypeptide: Flavohemoprotein (396 aa).

Residues 1 to 136 (MLDTQTIAIV…LADVFIQRES (136 aa)) form the Globin domain. Histidine 85 is a heme b binding site. Residues tyrosine 95 and glutamate 135 each act as charge relay system in the active site. The interval 147–396 (GGWRTLRRFR…YECFGPHKVI (250 aa)) is reductase. One can recognise an FAD-binding FR-type domain in the interval 150 to 255 (RTLRRFRIIK…APPRGDFFLD (106 aa)). Residues tyrosine 188 and 204–207 (RQYS) contribute to the FAD site. Residue 268 to 273 (GVGQTP) participates in NADP(+) binding. FAD is bound at residue 389–392 (CFGP).

Belongs to the globin family. Two-domain flavohemoproteins subfamily. This sequence in the C-terminal section; belongs to the flavoprotein pyridine nucleotide cytochrome reductase family. It depends on heme b as a cofactor. FAD serves as cofactor.

The catalysed reaction is 2 nitric oxide + NADPH + 2 O2 = 2 nitrate + NADP(+) + H(+). The enzyme catalyses 2 nitric oxide + NADH + 2 O2 = 2 nitrate + NAD(+) + H(+). Is involved in NO detoxification in an aerobic process, termed nitric oxide dioxygenase (NOD) reaction that utilizes O(2) and NAD(P)H to convert NO to nitrate, which protects the bacterium from various noxious nitrogen compounds. Therefore, plays a central role in the inducible response to nitrosative stress. The chain is Flavohemoprotein from Yersinia pestis.